Reading from the N-terminus, the 1325-residue chain is Zinc finger MYM-type protein 6 (1325 aa).

8 MYM-type zinc fingers span residues Gln113–Val151, Lys163–Val206, His213–Pro248, Glu296–Leu334, Tyr342–Leu443, Phe451–Val485, Lys492–Asn531, and Glu538–Ile572. A Phosphoserine modification is found at Ser397. Residues Glu665–Ser733 are disordered. Over residues Pro695–Pro706 the composition is skewed to polar residues.

As to expression, expressed at high levels in heart, skeletal muscle, kidney and liver.

It is found in the nucleus. Plays a role in the regulation of cell morphology and cytoskeletal organization. This chain is Zinc finger MYM-type protein 6 (ZMYM6), found in Homo sapiens (Human).